A 275-amino-acid polypeptide reads, in one-letter code: Large ribosomal subunit protein uL2 (275 aa).

A disordered region spans residues 222 to 257 (GTAMNAVDHPHGGGRGRSKGNNQPRSPWNQPAKGFK). Residues 240 to 250 (KGNNQPRSPWN) show a composition bias toward polar residues.

This sequence belongs to the universal ribosomal protein uL2 family. Part of the 50S ribosomal subunit. Forms a bridge to the 30S subunit in the 70S ribosome.

Functionally, one of the primary rRNA binding proteins. Required for association of the 30S and 50S subunits to form the 70S ribosome, for tRNA binding and peptide bond formation. It has been suggested to have peptidyltransferase activity; this is somewhat controversial. Makes several contacts with the 16S rRNA in the 70S ribosome. This Endomicrobium trichonymphae protein is Large ribosomal subunit protein uL2.